The sequence spans 162 residues: NADH-quinone oxidoreductase subunit I (162 aa).

4Fe-4S ferredoxin-type domains lie at 52 to 82 (LRRYPNGEERCIACKLCEAICPAQAITIEAG) and 93 to 122 (VRYDIDMVKCIYCGLCQEACPVDAIVEGPN). [4Fe-4S] cluster contacts are provided by C62, C65, C68, C72, C102, C105, C108, and C112.

This sequence belongs to the complex I 23 kDa subunit family. As to quaternary structure, NDH-1 is composed of 14 different subunits. Subunits NuoA, H, J, K, L, M, N constitute the membrane sector of the complex. Requires [4Fe-4S] cluster as cofactor.

It is found in the cell inner membrane. It carries out the reaction a quinone + NADH + 5 H(+)(in) = a quinol + NAD(+) + 4 H(+)(out). Functionally, NDH-1 shuttles electrons from NADH, via FMN and iron-sulfur (Fe-S) centers, to quinones in the respiratory chain. The immediate electron acceptor for the enzyme in this species is believed to be ubiquinone. Couples the redox reaction to proton translocation (for every two electrons transferred, four hydrogen ions are translocated across the cytoplasmic membrane), and thus conserves the redox energy in a proton gradient. This Nitrobacter hamburgensis (strain DSM 10229 / NCIMB 13809 / X14) protein is NADH-quinone oxidoreductase subunit I.